We begin with the raw amino-acid sequence, 424 residues long: GDP-fucose protein O-fucosyltransferase 2 (424 aa).

Positions 1 to 20 (MHFFPIQLLVLFFAEKIAFA) are cleaved as a signal peptide. Position 51–55 (51–55 (GEGFN)) interacts with GDP-beta-L-fucose. The Proton acceptor role is filled by Glu-52. A disulfide bridge links Cys-154 with Cys-187. The N-linked (GlcNAc...) asparagine glycan is linked to Asn-205. Residues 288-290 (HWR), Asp-366, and 383-384 (TF) each bind GDP-beta-L-fucose. Cys-407 and Cys-414 form a disulfide bridge.

The protein belongs to the glycosyltransferase 68 family. As to expression, expressed in the anterior part of embryos, in the hypodermal and neuronal cells of the head. Expressed at different levels in a variety of cell types after hatching, including neuronal, hypodermal, muscle, intestinal, and somatic gonadal cells. Expressed in the nerve ring around the pharynx, in dorsal and ventral nerve cords, intestine, and a variety of hypodermal cells of L1-L3 larvae. Expressed in gonadal sheath cells, spermatheca, and tissues surrounding the vulva of adult hermaphrodites, and in the body wall muscle and hypodermal cells of adults of both sexes.

It is found in the endoplasmic reticulum. It localises to the golgi apparatus. The catalysed reaction is L-seryl-[protein] + GDP-beta-L-fucose = 3-O-(alpha-L-fucosyl)-L-seryl-[protein] + GDP + H(+). It carries out the reaction L-threonyl-[protein] + GDP-beta-L-fucose = 3-O-(alpha-L-fucosyl)-L-threonyl-[protein] + GDP + H(+). Its pathway is protein modification; protein glycosylation. Its function is as follows. Catalyzes the reaction that attaches fucose through an O-glycosidic linkage to a conserved serine or threonine residue in the consensus sequence C1-X-X-S/T-C2 of thrombospondin type I repeats (TSRs) where C1 and C2 are the first and second cysteines of the repeat, respectively. O-fucosylates members of several protein families including the ADAMTS superfamily and the thrombospondin (TSP) and spondin families. In Caenorhabditis elegans, this protein is GDP-fucose protein O-fucosyltransferase 2 (pad-2).